The sequence spans 702 residues: Acetylcholinesterase (702 aa).

Residues 1–36 (MEIRGLITRLLGPCHLRHLILCSLGLYSILVQSVHC) form the signal peptide. Positions 107 to 134 (HIHSTTTRRRGLTRRESSSDATDSDPLV) are disordered. An N-linked (GlcNAc...) asparagine glycan is attached at N187. C195 and C222 form a disulfide bridge. The Acyl-ester intermediate role is filled by S327. C381 and C394 are disulfide-bonded. Active-site charge relay system residues include E453 and H567. C529 and C650 are joined by a disulfide. An N-linked (GlcNAc...) asparagine glycan is attached at N637.

It belongs to the type-B carboxylesterase/lipase family.

It localises to the synapse. The protein localises to the secreted. It is found in the cell membrane. It carries out the reaction acetylcholine + H2O = choline + acetate + H(+). Rapidly hydrolyzes choline released into the synapse. The sequence is that of Acetylcholinesterase (ACHE1) from Culex pipiens (House mosquito).